The following is a 159-amino-acid chain: Nascent polypeptide-associated complex subunit beta (159 aa).

Disordered regions lie at residues 1–39 and 121–159; these read MDMEKLKRMQARGGVRTGDGKGTPRRKVKNVHKSTGMDD and ESYQSMQKAEGGEDKKDDDEDDDDIPDLVEGENFEDKVE. Basic residues predominate over residues 23–32; it reads TPRRKVKNVH. The NAC-A/B domain occupies 36–101; that stretch reads GMDDKKLQTS…GEDKELTELV (66 aa). Residues 136 to 153 show a composition bias toward acidic residues; it reads KDDDEDDDDIPDLVEGEN.

Belongs to the NAC-beta family. In terms of assembly, part of the nascent polypeptide-associated complex (NAC), consisting of EGD2 and EGD1. NAC associates with ribosomes via EGD1.

It localises to the cytoplasm. The protein localises to the nucleus. Its function is as follows. Component of the nascent polypeptide-associated complex (NAC), a dynamic component of the ribosomal exit tunnel, protecting the emerging polypeptides from interaction with other cytoplasmic proteins to ensure appropriate nascent protein targeting. The NAC complex also promotes mitochondrial protein import by enhancing productive ribosome interactions with the outer mitochondrial membrane and blocks the inappropriate interaction of ribosomes translating non-secretory nascent polypeptides with translocation sites in the membrane of the endoplasmic reticulum. EGD1 may act as a transcription factor that exert a negative effect on the expression of several genes that are transcribed by RNA polymerase II. In Botryotinia fuckeliana (strain B05.10) (Noble rot fungus), this protein is Nascent polypeptide-associated complex subunit beta (egd1).